Consider the following 722-residue polypeptide: Bifunctional UDP-N-acetylglucosamine 2-epimerase/N-acetylmannosamine kinase (722 aa).

UDP is bound by residues R19, S23, R113, H220, and N253. CMP-N-acetyl-beta-neuraminate is bound by residues K259, E271, K280, and H281. 5 residues coordinate UDP: V282, S301, S302, E307, and R321. Positions 406-722 are N-acetylmannosamine kinase; sequence TLSALAVDLG…VLDYTTRRIH (317 aa). Mg(2+) is bound at residue D413. An N-acyl-D-mannosamine 6-phosphate is bound at residue G416. ADP contacts are provided by T417, N418, and R420. Residues G476, R477, T489, N516, D517, and G545 each coordinate an N-acyl-D-mannosamine 6-phosphate. G476, R477, T489, N516, and D517 together coordinate an N-acyl-D-mannosamine. The active site involves D517. 2 residues coordinate an N-acyl-D-mannosamine: E566 and H569. H569 is a binding site for an N-acyl-D-mannosamine 6-phosphate. The Zn(2+) site is built by H569, C579, C581, and C586. E588 is an an N-acyl-D-mannosamine 6-phosphate binding site. Residue E588 coordinates an N-acyl-D-mannosamine.

In the N-terminal section; belongs to the UDP-N-acetylglucosamine 2-epimerase family. It in the C-terminal section; belongs to the ROK (NagC/XylR) family. In terms of assembly, homodimer. Homotetramer. Homohexamer. The hexameric form exhibits both enzyme activities, whereas the dimeric form only catalyzes the phosphorylation of N-acyl-D-mannosamine. Post-translationally, phosphorylated. Phosphorylation by PKC activates the UDP-N-acetylglucosamine 2-epimerase activity. As to expression, widely expressed. Highest expression is observed in liver.

The protein localises to the cytoplasm. It is found in the cytosol. It carries out the reaction UDP-N-acetyl-alpha-D-glucosamine + H2O = aldehydo-N-acetyl-D-mannosamine + UDP + H(+). The enzyme catalyses an N-acyl-D-mannosamine + ATP = an N-acyl-D-mannosamine 6-phosphate + ADP + H(+). The protein operates within amino-sugar metabolism; N-acetylneuraminate biosynthesis. The UDP-N-acetylglucosamine 2-epimerase activity, in contrast to the N-acetylmannosamine kinase activity, exhibits allosteric regulation by cytidine monophosphate-N-acetylneuraminic acid (CMP-Neu5Ac), the end product of neuraminic acid biosynthesis. Moreover, the activity is contingent upon the oligomeric state of the enzyme. The monomeric form is inactive, while the dimeric form selectively catalyzes the phosphorylation of N-acetylmannosamine. The hexameric form, on the other hand, demonstrates full proficiency in both enzyme activities. Furthermore, the UDP-N-acetylglucosamine 2-epimerase activity is increased by PKC-mediated phosphorylation. Its function is as follows. Bifunctional enzyme that possesses both UDP-N-acetylglucosamine 2-epimerase and N-acetylmannosamine kinase activities, and serves as the initiator of the biosynthetic pathway leading to the production of N-acetylneuraminic acid (NeuAc), a critical precursor in the synthesis of sialic acids. By catalyzing this pivotal and rate-limiting step in sialic acid biosynthesis, this enzyme assumes a pivotal role in governing the regulation of cell surface sialylation. Sialic acids represent a category of negatively charged sugars that reside on the surface of cells as terminal components of glycoconjugates and mediate important functions in various cellular processes, including cell adhesion, signal transduction, and cellular recognition. The polypeptide is Bifunctional UDP-N-acetylglucosamine 2-epimerase/N-acetylmannosamine kinase (Rattus norvegicus (Rat)).